A 46-amino-acid chain; its full sequence is Small, acid-soluble spore protein N (46 aa).

The segment at 1-46 is disordered; the sequence is MAKMKHGSAQFRPDHLGTQPRKSDANKGKKMNTKGNENPQYIPPKG.

The protein belongs to the SspN family.

It is found in the spore core. This chain is Small, acid-soluble spore protein N, found in Halalkalibacterium halodurans (strain ATCC BAA-125 / DSM 18197 / FERM 7344 / JCM 9153 / C-125) (Bacillus halodurans).